The sequence spans 511 residues: Sodium/proline symporter 2 (511 aa).

13 helical membrane passes run 16–36 (WQTY…GYYG), 54–74 (IGPY…WMIM), 85–105 (LSAM…YFVV), 139–159 (IISG…GFVS), 175–195 (GLLM…YLAV), 204–224 (VIML…LNGI), 246–266 (VLGI…PHII), 286–306 (ISWM…GIAF), 327–347 (ILFH…AIMS), 381–401 (FLMV…WIAW), 410–430 (LVGN…IFSL), 438–458 (TGAL…IVWI), and 467–487 (LFGM…TYFV).

The protein belongs to the sodium:solute symporter (SSF) (TC 2.A.21) family.

Its subcellular location is the cell membrane. It carries out the reaction L-proline(in) + Na(+)(in) = L-proline(out) + Na(+)(out). Catalyzes the sodium-dependent uptake of extracellular L-proline. The chain is Sodium/proline symporter 2 (putP2) from Staphylococcus saprophyticus subsp. saprophyticus (strain ATCC 15305 / DSM 20229 / NCIMB 8711 / NCTC 7292 / S-41).